A 1125-amino-acid chain; its full sequence is tRNA (34-2'-O)-methyltransferase regulator WDR6 (1125 aa).

M1 carries the N-acetylmethionine modification. WD repeat units lie at residues 89 to 130 (SKGL…GNVA), 155 to 197 (TDRC…PDNK), 207 to 246 (GHVG…VPGG), 256 to 294 (GHSA…QAFR), 295 to 335 (GHQG…YPGL), 346 to 384 (SRPG…WEQL), 433 to 475 (LFQG…TGKA), 489 to 528 (SKQR…FKKP), 567 to 605 (HGKQ…QPVL), 611 to 650 (RGMN…KLHI), 652 to 692 (NCGG…IRPN), 725 to 765 (EHPD…GAAH), 767 to 798 (LTAV…HPGL), 860 to 905 (TRYM…RILH), 912 to 958 (HHKR…DRGS), 982 to 1024 (AHSC…PELE), and 1047 to 1085 (AHAA…PTFM).

Belongs to the WD repeat WDR6 family. As to quaternary structure, interacts with FTSJ1; the interaction is direct, and required for 2'-O-methylation of position 34 in substrate tRNAs. Interacts with IRS4. Interacts with STK11/LKB1. As to expression, expressed in hypothalamus, hippocampus, cerebrum cortex and cerebellum.

It localises to the cytoplasm. In terms of biological role, together with methyltransferase FTSJ1, methylates the 2'-O-ribose of nucleotides at position 34 of the tRNA anticodon loop of substrate tRNAs. Required for the correct positioning of the substrate tRNA for methylation. Required to suppress amino acid starvation-induced autophagy. Enhances the STK11/LKB1-induced cell growth suppression activity. The protein is tRNA (34-2'-O)-methyltransferase regulator WDR6 (Wdr6) of Rattus norvegicus (Rat).